A 161-amino-acid polypeptide reads, in one-letter code: Long arms of the bivalent protein 1 (161 aa).

A PP1 binding motif motif is present at residues 72–75 (KVIW). The disordered stretch occupies residues 85 to 161 (GTMFEDFKED…SDKTMCSGQS (77 aa)). Residues 97 to 115 (QESVSSISNNEANWGSSVN) are compositionally biased toward polar residues. A compositionally biased stretch (basic and acidic residues) spans 120-129 (NYEKMQKEET). The segment covering 130-151 (FDPYDSDSDTSEDSDFDEDFED) has biased composition (acidic residues).

Interacts with gsp-1 and gsp-2; the interaction is direct.

The protein resides in the chromosome. It localises to the nucleus. Involved in sister chromatid cohesion during mitosis and meiosis. In association with the gsp-2 phosphatase, it both restricts the localization and antagonizes the function of the air-2 kinase during meiosis I and mitosis to promote chromatid cohesion and spindle attachment. This in turn, drives germ cell immortality. Furthermore, may play a role in ensuring the timely assembly of the synaptonemal complex during prophase I of meiosis. The polypeptide is Long arms of the bivalent protein 1 (Caenorhabditis elegans).